The sequence spans 634 residues: Formate--tetrahydrofolate ligase (634 aa).

Residue 78 to 85 (TPLGEGKS) coordinates ATP.

This sequence belongs to the formate--tetrahydrofolate ligase family. Homodimer.

It catalyses the reaction (6S)-5,6,7,8-tetrahydrofolate + formate + ATP = (6R)-10-formyltetrahydrofolate + ADP + phosphate. It participates in one-carbon metabolism; tetrahydrofolate interconversion. This chain is Formate--tetrahydrofolate ligase (THFS), found in Arabidopsis thaliana (Mouse-ear cress).